A 365-amino-acid chain; its full sequence is Putative outer membrane porin protein NmpC (365 aa).

A signal peptide spans 1–23 (MKKLTVAISAVAASVLMAMSAQA).

The protein belongs to the Gram-negative porin family. Homotrimer.

The protein localises to the cell outer membrane. The chain is Putative outer membrane porin protein NmpC (nmpC) from Escherichia coli (strain K12).